Here is a 573-residue protein sequence, read N- to C-terminus: Arylsulfatase I (573 aa).

An N-terminal signal peptide occupies residues 1–23; it reads MHALSGFSLVSLLSLGYLSWDWA. The Ca(2+) site is built by Asp55, Asp56, and Cys93. The active-site Nucleophile is the Cys93. 3-oxoalanine (Cys) is present on Cys93. Lys147 lines the substrate pocket. His149 is a catalytic residue. His239 provides a ligand contact to substrate. N-linked (GlcNAc...) asparagine glycosylation is found at Asn276 and Asn288. Positions 297 and 298 each coordinate Ca(2+). Lys315 provides a ligand contact to substrate. 2 N-linked (GlcNAc...) asparagine glycosylation sites follow: Asn466 and Asn496. The interval 506-550 is disordered; sequence AANPRAHPDFNGGAWGPWASDEDEEEEDEEEEGRARSFPRGRRKK. Acidic residues predominate over residues 525 to 537; the sequence is SDEDEEEEDEEEE.

This sequence belongs to the sulfatase family. The cofactor is Ca(2+). Post-translationally, the oxidation of Cys-93 residue to 3-oxoalanine (also known as C(alpha)-formylglycine) by SUMF1/Sulfatase-modifying factor 1, seems critical for catalytic activity.

It is found in the secreted. It localises to the endoplasmic reticulum. Displays arylsulfatase activity at neutral pH, when co-expressed with SUMF1; arylsulfatase activity is measured in the secretion medium of retinal cell line, but no activity is recorded when measured in cell extracts. This chain is Arylsulfatase I (Arsi), found in Rattus norvegicus (Rat).